A 102-amino-acid chain; its full sequence is MICOS complex subunit MIC12 (102 aa).

A helical membrane pass occupies residues 4–26 (VLKLTSVTLAASSLAAAGYFYAF).

This sequence belongs to the MICOS complex subunit Mic12 family. In terms of assembly, component of the mitochondrial contact site and cristae organizing system (MICOS) complex.

The protein resides in the mitochondrion inner membrane. Its function is as follows. Component of the MICOS complex, a large protein complex of the mitochondrial inner membrane that plays crucial roles in the maintenance of crista junctions, inner membrane architecture, and formation of contact sites to the outer membrane. This is MICOS complex subunit MIC12 (AIM5) from Lachancea thermotolerans (strain ATCC 56472 / CBS 6340 / NRRL Y-8284) (Yeast).